Here is a 427-residue protein sequence, read N- to C-terminus: Glutamate-1-semialdehyde 2,1-aminomutase (427 aa).

At Lys-268 the chain carries N6-(pyridoxal phosphate)lysine.

Belongs to the class-III pyridoxal-phosphate-dependent aminotransferase family. HemL subfamily. Requires pyridoxal 5'-phosphate as cofactor.

It is found in the cytoplasm. The catalysed reaction is (S)-4-amino-5-oxopentanoate = 5-aminolevulinate. It functions in the pathway porphyrin-containing compound metabolism; protoporphyrin-IX biosynthesis; 5-aminolevulinate from L-glutamyl-tRNA(Glu): step 2/2. The chain is Glutamate-1-semialdehyde 2,1-aminomutase from Methanococcus maripaludis (strain C5 / ATCC BAA-1333).